The sequence spans 444 residues: Structure-specific endonuclease subunit SLX1 (444 aa).

Positions 23-105 constitute a GIY-YIG domain; the sequence is AFYCCYLLRS…QNTKVSRHAD (83 aa). The SLX1-type zinc-finger motif lies at 240–295; the sequence is CGVCKQRLILQHDIIAVCSHSSCHCAAHLSCLSSHFLKDKDSDSELIPREGTCPAC. Disordered regions lie at residues 323 to 355 and 386 to 444; these read RRRRQAGTPKGQGLKSVRGRGRGHSEDESDALQ and AHRP…EVIE.

Belongs to the SLX1 family. In terms of assembly, forms a heterodimer with SLX4. It depends on a divalent metal cation as a cofactor.

The protein resides in the nucleus. Catalytic subunit of the SLX1-SLX4 structure-specific endonuclease that resolves DNA secondary structures generated during DNA repair and recombination. Has endonuclease activity towards branched DNA substrates, introducing single-strand cuts in duplex DNA close to junctions with ss-DNA. This is Structure-specific endonuclease subunit SLX1 from Paracoccidioides brasiliensis (strain Pb18).